Here is a 340-residue protein sequence, read N- to C-terminus: Fructose-1,6-bisphosphatase class 1 (340 aa).

4 residues coordinate Mg(2+): glutamate 107, aspartate 126, leucine 128, and aspartate 129. Asparagine 215 contributes to the substrate binding site. Glutamate 287 is a Mg(2+) binding site.

Belongs to the FBPase class 1 family. Homotetramer. Requires Mg(2+) as cofactor.

It localises to the cytoplasm. It carries out the reaction beta-D-fructose 1,6-bisphosphate + H2O = beta-D-fructose 6-phosphate + phosphate. It functions in the pathway carbohydrate biosynthesis; gluconeogenesis. This Brucella suis biovar 1 (strain 1330) protein is Fructose-1,6-bisphosphatase class 1.